A 339-amino-acid chain; its full sequence is Protein-arginine kinase (339 aa).

The Phosphagen kinase C-terminal domain occupies 14 to 242; the sequence is IVINSNISLS…LNVISEEKKF (229 aa). Residues 17-21, 164-168, and 195-200 contribute to the ATP site; these read NSNIS, RASVN, and KGLYEE.

It belongs to the ATP:guanido phosphotransferase family.

The enzyme catalyses L-arginyl-[protein] + ATP = N(omega)-phospho-L-arginyl-[protein] + ADP + H(+). Its function is as follows. Catalyzes the specific phosphorylation of arginine residues in proteins. The chain is Protein-arginine kinase from Clostridium botulinum (strain Eklund 17B / Type B).